The sequence spans 984 residues: Hyaluronate lyase (984 aa).

3 stretches are compositionally biased toward polar residues: residues 1 to 12 (MKQVVDNQTQNK), 19 to 32 (DFNQTNPVSGSWSH), and 54 to 66 (IQRTEQGQVSLSS). 2 disordered regions span residues 1-32 (MKQVVDNQTQNKELVKNGDFNQTNPVSGSWSH) and 49-68 (DKSPIIQRTEQGQVSLSSDK). Residues 1–40 (MKQVVDNQTQNKELVKNGDFNQTNPVSGSWSHTSAREWSA) form the signal peptide. Residues N429, H479, and Y488 contribute to the active site. Over residues 701-726 (TEKDAKREDTTKEFMSKHSKDAKEKT) the composition is skewed to basic and acidic residues. Residues 701–728 (TEKDAKREDTTKEFMSKHSKDAKEKTGQ) form a disordered region.

It belongs to the polysaccharide lyase 8 family.

The protein localises to the secreted. It catalyses the reaction [hyaluronan](n) = n 3-(4-deoxy-beta-D-gluc-4-enuronosyl)-N-acetyl-D-glucosamine + H2O. The sequence is that of Hyaluronate lyase from Streptococcus agalactiae serotype III (strain NEM316).